We begin with the raw amino-acid sequence, 498 residues long: Glutamate--tRNA ligase (498 aa).

The 'HIGH' region signature appears at 11 to 21 (PSPTGHLHIGN). Positions 261–265 (KLSKR) match the 'KMSKS' region motif. K264 serves as a coordination point for ATP.

It belongs to the class-I aminoacyl-tRNA synthetase family. Glutamate--tRNA ligase type 1 subfamily. In terms of assembly, monomer.

The protein resides in the cytoplasm. The catalysed reaction is tRNA(Glu) + L-glutamate + ATP = L-glutamyl-tRNA(Glu) + AMP + diphosphate. Catalyzes the attachment of glutamate to tRNA(Glu) in a two-step reaction: glutamate is first activated by ATP to form Glu-AMP and then transferred to the acceptor end of tRNA(Glu). The protein is Glutamate--tRNA ligase of Oenococcus oeni (strain ATCC BAA-331 / PSU-1).